We begin with the raw amino-acid sequence, 256 residues long: Lysosomal membrane ascorbate-dependent ferrireductase CYB561A3 (256 aa).

Residues 1 to 3 (MAS) lie on the Cytoplasmic side of the membrane. The chain crosses the membrane as a helical span at residues 4–24 (GWFYMSCMVLGSLGSMCILFT). One can recognise a Cytochrome b561 domain in the interval 12-219 (VLGSLGSMCI…FGLLVLYILL (208 aa)). Residues 25-40 (TYWMQYWRGGFAWDGT) are Lumenal-facing. Residues 41-61 (VLMFNWHPVLMVSGMVVLYGA) traverse the membrane as a helical segment. Histidine 47 and arginine 67 together coordinate heme b. Residues 62–83 (ASLVYRLPASWVGPKLPWKVLH) lie on the Cytoplasmic side of the membrane. Residues lysine 76 and lysine 80 each coordinate L-ascorbate. Heme b is bound at residue histidine 83. A helical transmembrane segment spans residues 84 to 104 (AALHLLAFTVTVVGLTAVFGF). The Lumenal portion of the chain corresponds to 105–119 (HNHSKITHLYSLHSW). Residue asparagine 106 is glycosylated (N-linked (GlcNAc...) asparagine). Heme b contacts are provided by residues 112–115 (HLYS) and histidine 117. A helical membrane pass occupies residues 120-140 (LGITTVALFACQWFLGFAVFL). Residues 141 to 154 (LPWASQWLRSLLKP) lie on the Cytoplasmic side of the membrane. Arginine 149 contributes to the L-ascorbate binding site. The helical transmembrane segment at 155 to 175 (VHVFFGACILSLSIASVISGI) threads the bilayer. Heme b contacts are provided by histidine 156 and glutamate 177. Topologically, residues 176–202 (NEKLFFVLKNATRPYSSLPGEAVFANS) are lumenal. The helical transmembrane segment at 203 to 223 (TGILVVSFGLLVLYILLASSW) threads the bilayer. A heme b-binding site is contributed by arginine 224. Residues 224–256 (RRPDPGALTDRQVWLLVSHYRWDKAKKACFAPC) are Cytoplasmic-facing.

In terms of assembly, homodimer. Heme b is required as a cofactor. In terms of processing, N-glycosylated.

Its subcellular location is the late endosome membrane. It localises to the lysosome membrane. The catalysed reaction is Fe(3+)(out) + L-ascorbate(in) = monodehydro-L-ascorbate radical(in) + Fe(2+)(out) + H(+). Transmembrane reductase that uses ascorbate as an electron donor in the cytoplasm and transfers electrons across membranes to reduce iron cations Fe(3+) into Fe(2+) in the lumen of the late endosome and lysosome. Reduced iron can then be extruded from the late endosome and lysosome to the cytoplasm by divalent metal-specific transporters. It is therefore most probably involved in endosomal and lysosomal cellular iron homeostasis. This chain is Lysosomal membrane ascorbate-dependent ferrireductase CYB561A3, found in Rattus norvegicus (Rat).